The primary structure comprises 600 residues: MTDLSRIRNFSIIAHIDHGKSTLADRLIEFCGAIEAREMKAQLLDNMDIERERGITIKAQTVRLNYKAKDGEIYQLNLMDTPGHVDFAYEVSRSLAACEGSILVVDASQGVEAQTLANVYQAIDANHEIVPVLNKIDLPAADVPRVKQQIEDVIGLDASDAVEVSAKSGINIDGVLEAIVTRLPPPKGDAAAPLQALIVDSWYDAYLGVVVLVRVVNGELRTGQKVRFMATGATRELDRVGIFGPKKMLVDRLGPGEMGFVTAAIKDIRDTKVGDTITEEKRLAPTPLPGFKPSIPVVFCGLFPTDAADFEDLRESLGKLALNDASFQFEMESSAALGFGFRCGFLGLLHLEIIQERLEREFNLDLITTAPSVVYRMHMNDGTMKEMHNPADMPDPVKIDRIEEPWIKANIMLPDEYLGGVLQLCTERRGIQKDLTYVGGRAMLVYELPLNEVVFDFYDRLKSISRGYASFDYVLEGYREGDLVKMSILVNNEPVDALAMIVHRTQAEYRGRQLCERLKDLIPRHLFKIPIQAAIGGRVIARETIAALRKDVLAKCYGGDISRKRKLLDKQKEGKKRMRQFGEVEIPQSAFIAALRMGQE.

The 183-residue stretch at 5–187 (SRIRNFSIIA…AIVTRLPPPK (183 aa)) folds into the tr-type G domain. GTP is bound by residues 17-22 (DHGKST) and 134-137 (NKID).

Belongs to the TRAFAC class translation factor GTPase superfamily. Classic translation factor GTPase family. LepA subfamily.

Its subcellular location is the cell inner membrane. It catalyses the reaction GTP + H2O = GDP + phosphate + H(+). In terms of biological role, required for accurate and efficient protein synthesis under certain stress conditions. May act as a fidelity factor of the translation reaction, by catalyzing a one-codon backward translocation of tRNAs on improperly translocated ribosomes. Back-translocation proceeds from a post-translocation (POST) complex to a pre-translocation (PRE) complex, thus giving elongation factor G a second chance to translocate the tRNAs correctly. Binds to ribosomes in a GTP-dependent manner. The sequence is that of Elongation factor 4 from Rhodospirillum centenum (strain ATCC 51521 / SW).